Here is a 481-residue protein sequence, read N- to C-terminus: Drebrin-like protein (481 aa).

One can recognise an ADF-H domain in the interval 3–131 (SLDISDPDIT…DEKAITAALN (129 aa)). The span at 217-227 (YWKQQQAEKQK) shows a compositional bias: basic and acidic residues. Positions 217-423 (YWKQQQAEKQ…PAEEQYDQSG (207 aa)) are disordered. Positions 228-237 (QQQQQQQQQA) are enriched in low complexity. The span at 248 to 261 (TVGNKFQEQVSKPT) shows a compositional bias: polar residues. Residues 291-300 (PPAPSRPAAP) are compositionally biased toward pro residues. Positions 325-335 (QYEEPQYEEEQ) are enriched in acidic residues. Residues 336–413 (QQQYEEQPTE…YQEEQQQYEQ (78 aa)) show a composition bias toward low complexity. Residues 422–481 (SGYLQAKALYDYNGENDGDLSFREGDIITILDQSDPDGWWQGSLPTGEQGFFPSNFVQQL) form the SH3 domain.

Belongs to the ABP1 family.

It localises to the cytoplasm. The protein localises to the cytoskeleton. It is found in the cell projection. Its subcellular location is the pseudopodium. Actin-binding adapter protein. Binds to F-actin but is not involved in actin polymerization, capping or bundling. Does not bind G-actin. Controls pseudopodium number and motility in early stages of chemotactic aggregation. This Dictyostelium discoideum (Social amoeba) protein is Drebrin-like protein (abpE-1).